The primary structure comprises 76 residues: Acyl carrier protein (76 aa).

Residues 1–76 (MDTFESVKAV…DVVAYIEANK (76 aa)) enclose the Carrier domain. Position 36 is an O-(pantetheine 4'-phosphoryl)serine (Ser-36).

This sequence belongs to the acyl carrier protein (ACP) family. In terms of processing, 4'-phosphopantetheine is transferred from CoA to a specific serine of apo-ACP by AcpS. This modification is essential for activity because fatty acids are bound in thioester linkage to the sulfhydryl of the prosthetic group.

It is found in the cytoplasm. The protein operates within lipid metabolism; fatty acid biosynthesis. Its function is as follows. Carrier of the growing fatty acid chain in fatty acid biosynthesis. The chain is Acyl carrier protein from Helicobacter hepaticus (strain ATCC 51449 / 3B1).